Here is a 1099-residue protein sequence, read N- to C-terminus: Glutamine--fructose-6-phosphate aminotransferase [isomerizing] (1099 aa).

Cys2 functions as the Nucleophile; for GATase activity in the catalytic mechanism. A Glutamine amidotransferase type-2; first part domain is found at 2-71 (CGIIGYIGND…DIDGNIGIGH (70 aa)). Residues 198 to 253 (LRKVREKLGLTRKDVEKLCGVKEIYIVKIETGKLESIEEERLKKLCSLYGINFEEI) enclose the HTH cro/C1-type domain. One can recognise a DOD-type homing endonuclease domain in the interval 278–413 (IIGYIIGDGH…IQFLLLRFGI (136 aa)). The Glutamine amidotransferase type-2; second part domain maps to 571–723 (SRWATHGNVC…DGDVVVIKKK (153 aa)). SIS domains lie at 786-923 (LAKC…LLGR) and 948-1089 (TIKE…VDKP). Lys1094 (for Fru-6P isomerization activity) is an active-site residue.

This sequence in the C-terminal section; belongs to the SIS family. GFAT subfamily. In terms of assembly, homodimer. Post-translationally, this protein undergoes a protein self splicing that involves a post-translational excision of the intervening region (intein) followed by peptide ligation.

It is found in the cytoplasm. The catalysed reaction is D-fructose 6-phosphate + L-glutamine = D-glucosamine 6-phosphate + L-glutamate. In terms of biological role, catalyzes the first step in hexosamine metabolism, converting fructose-6P into glucosamine-6P using glutamine as a nitrogen source. The chain is Glutamine--fructose-6-phosphate aminotransferase [isomerizing] (glmS) from Methanocaldococcus jannaschii (strain ATCC 43067 / DSM 2661 / JAL-1 / JCM 10045 / NBRC 100440) (Methanococcus jannaschii).